The sequence spans 411 residues: Tubulin beta-2 chain (411 aa).

GTP-binding residues include glutamate 37, serine 106, glycine 110, threonine 111, glycine 112, asparagine 172, and asparagine 194. Glutamate 37 serves as a coordination point for Mg(2+). The disordered stretch occupies residues 392 to 411 (QYQDATAEPEGXYEEDYDEA). Acidic residues predominate over residues 402–411 (GXYEEDYDEA).

It belongs to the tubulin family. As to quaternary structure, dimer of alpha and beta chains. A typical microtubule is a hollow water-filled tube with an outer diameter of 25 nm and an inner diameter of 15 nM. Alpha-beta heterodimers associate head-to-tail to form protofilaments running lengthwise along the microtubule wall with the beta-tubulin subunit facing the microtubule plus end conferring a structural polarity. Microtubules usually have 13 protofilaments but different protofilament numbers can be found in some organisms and specialized cells. Requires Mg(2+) as cofactor.

The protein resides in the cytoplasm. It localises to the cytoskeleton. In terms of biological role, tubulin is the major constituent of microtubules, a cylinder consisting of laterally associated linear protofilaments composed of alpha- and beta-tubulin heterodimers. Microtubules grow by the addition of GTP-tubulin dimers to the microtubule end, where a stabilizing cap forms. Below the cap, tubulin dimers are in GDP-bound state, owing to GTPase activity of alpha-tubulin. This Anemia phyllitidis (Fern) protein is Tubulin beta-2 chain (TUBB2).